Consider the following 475-residue polypeptide: 1-aminocyclopropane-1-carboxylate synthase CMA101 (475 aa).

Lys272 is modified (N6-(pyridoxal phosphate)lysine).

Belongs to the class-I pyridoxal-phosphate-dependent aminotransferase family. As to quaternary structure, homodimer. Pyridoxal 5'-phosphate is required as a cofactor.

It carries out the reaction S-adenosyl-L-methionine = 1-aminocyclopropane-1-carboxylate + S-methyl-5'-thioadenosine + H(+). The protein operates within alkene biosynthesis; ethylene biosynthesis via S-adenosyl-L-methionine; ethylene from S-adenosyl-L-methionine: step 1/2. Catalyzes the formation of 1-aminocyclopropane-1-carboxylate, a direct precursor of ethylene in higher plants. The chain is 1-aminocyclopropane-1-carboxylate synthase CMA101 (ACS2) from Cucurbita maxima (Pumpkin).